A 342-amino-acid chain; its full sequence is D-alanine--D-alanine ligase (342 aa).

Positions 132-326 (KLYAKECGIE…VAKHLPKSKN (195 aa)) constitute an ATP-grasp domain. 159-210 (EYPVIIKPNHLGSSIGVSVVYDSSELEYALDVAFEFDDEVLIEPFIEGIEEY) serves as a coordination point for ATP. Mg(2+) contacts are provided by D282, E294, and N296.

It belongs to the D-alanine--D-alanine ligase family. The cofactor is Mg(2+). Requires Mn(2+) as cofactor.

Its subcellular location is the cytoplasm. The catalysed reaction is 2 D-alanine + ATP = D-alanyl-D-alanine + ADP + phosphate + H(+). It participates in cell wall biogenesis; peptidoglycan biosynthesis. Functionally, cell wall formation. The sequence is that of D-alanine--D-alanine ligase from Nitratiruptor sp. (strain SB155-2).